Consider the following 115-residue polypeptide: Beta-2-microglobulin (115 aa).

A signal peptide spans Met-1–Ala-18. Residues Pro-23–Gly-114 form the Ig-like C1-type domain.

Belongs to the beta-2-microglobulin family. Heterodimer of an alpha chain and a beta chain. Beta-2-microglobulin is the beta-chain of major histocompatibility complex class I molecules.

Its subcellular location is the secreted. In terms of biological role, component of the class I major histocompatibility complex (MHC). Involved in the presentation of peptide antigens to the immune system. The polypeptide is Beta-2-microglobulin (b2m) (Paralichthys olivaceus (Bastard halibut)).